The chain runs to 375 residues: MLFYFELVVILLCTKLAGDISVRLGQPSVLGKLIVGIIIGPAVLGIINSSELIDELSEIGVLLLMFMAGLETDLEELNRNLKSSFAVAAGGIIFPFIGGYVTGLLFGLIQSHAIFLGLLLCATSVSITVQTLRDLGKMNTRESTTILGAAVFDDVIVVILLAFVMSFLGTQDVNITLVIVKKIIFFVSIVFIAWKVVPWIMKMLVPLRVTEALISAALIICFSFSYYSEMMGIAGIIGAFAAGIAISQTEYKHEVEHKIEPIAYAIFVPVFFVSIGMEITFQGIGSQLWFIIIMTLIAIFTKLIGSGLGARLTGFNLQSSISIGAGMVSRGEVALIIAANGLTANLLAKENFTAIVIVVILTTIITPPLLKKYFV.

The next 10 membrane-spanning stretches (helical) occupy residues 27-47 (PSVL…LGII), 89-109 (AGGI…FGLI), 112-132 (HAIF…VQTL), 145-165 (TILG…AFVM), 183-203 (IIFF…IMKM), 204-224 (LVPL…CFSF), 226-246 (YYSE…GIAI), 261-281 (PIAY…EITF), 288-308 (LWFI…GSGL), and 350-370 (ENFT…PPLL).

Belongs to the monovalent cation:proton antiporter 2 (CPA2) transporter (TC 2.A.37) family.

It localises to the membrane. Its function is as follows. Contributes to the success of spore outgrowth from the germinated state during alkaline or Na(+) stress. Does not have a significant role in germination. This is Probable Na(+)/H(+) antiporter GerT (gerT) from Bacillus cereus.